The sequence spans 223 residues: Histone H1.5 (223 aa).

Low complexity predominate over residues 1 to 14 (MSETAPAETAAPAP). The segment at 1-56 (MSETAPAETAAPAPVEKSPAKKKTTKKAGAAKRKATGPPVSELITKAVSASKERGG) is disordered. N-acetylserine is present on serine 2. Serine 2 is modified (phosphoserine). Lysine 17 is modified (N6-acetyllysine). Phosphoserine is present on serine 18. Residues 20–35 (AKKKTTKKAGAAKRKA) show a composition bias toward basic residues. At lysine 27 the chain carries N6-methyllysine. Position 34 is an N6-(beta-hydroxybutyryl)lysine; alternate (lysine 34). Lysine 34 is modified (N6-succinyllysine; alternate). Threonine 36 bears the Phosphothreonine mark. The 74-residue stretch at 36 to 109 (TGPPVSELIT…GASGSFKLNK (74 aa)) folds into the H15 domain. Lysine 46 is subject to N6-acetyllysine. Lysine 52 bears the N6-(beta-hydroxybutyryl)lysine mark. Residue arginine 54 is modified to Citrulline. Position 64 is an N6-(beta-hydroxybutyryl)lysine (lysine 64). At lysine 75 the chain carries N6-acetyllysine. Lysine 85, lysine 90, and lysine 106 each carry N6-(beta-hydroxybutyryl)lysine. The disordered stretch occupies residues 91–223 (GTLVQTKGTG…KAKKAVSKKK (133 aa)). Over residues 119 to 130 (KAKKTGAAKAKK) the composition is skewed to basic residues. Residues threonine 135 and threonine 152 each carry the phosphothreonine modification. Basic residues predominate over residues 137-158 (KKPKKTAGAKKTVKKTPKKAKK). Position 165 is an N6-acetyllysine (lysine 165). The segment covering 166 to 184 (KVAKSPKKAKAAAKPKKAA) has biased composition (basic residues). Residues serine 170 and serine 186 each carry the phosphoserine modification. Residues 191–223 (KAVKSKASKPKVTKPKTAKPKAAKAKKAVSKKK) are compositionally biased toward basic residues.

Belongs to the histone H1/H5 family. Interacts with MSX1. H1 histones are progressively phosphorylated during the cell cycle, becoming maximally phosphorylated during late G2 phase and M phase, and being dephosphorylated sharply thereafter. In terms of processing, citrullination at Arg-54 (H1R54ci) by PADI4 takes place within the DNA-binding site of H1 and results in its displacement from chromatin and global chromatin decondensation, thereby promoting pluripotency and stem cell maintenance. Post-translationally, hydroxybutyrylation of histones is induced by starvation.

It localises to the nucleus. Its subcellular location is the chromosome. In terms of biological role, histone H1 protein binds to linker DNA between nucleosomes forming the macromolecular structure known as the chromatin fiber. Histones H1 are necessary for the condensation of nucleosome chains into higher-order structured fibers. Also acts as a regulator of individual gene transcription through chromatin remodeling, nucleosome spacing and DNA methylation. The chain is Histone H1.5 (H1-5) from Mus musculus (Mouse).